The chain runs to 245 residues: NLP effector protein Pc118551 (245 aa).

The N-terminal stretch at 1-19 (MNLRAFLLSAVAALVAVQA) is a signal peptide. Residues 121-127 (QRRHLWE) carry the Hepta-peptide GHRHDWE motif motif. Residue Asn140 is glycosylated (N-linked (GlcNAc...) asparagine).

Belongs to the Necrosis inducing protein (NPP1) family.

Its subcellular location is the secreted. Functionally, secreted effector that contributes strongly to virulence during infection by P.capsici. This chain is NLP effector protein Pc118551, found in Phytophthora capsici.